The chain runs to 81 residues: U6-theraphotoxin-Hs1a (81 aa).

The first 21 residues, 1-21 (MKASMFLALAGLVLLFVVCYA), serve as a signal peptide directing secretion. Residues 22–48 (SESEEKEFPRELLSTIFAVDDFKGEER) constitute a propeptide that is removed on maturation. 2 disulfide bridges follow: C50-C65 and C57-C70.

Belongs to the neurotoxin 10 (Hwtx-1) family. 51 (Hntx-8) subfamily. In terms of tissue distribution, expressed by the venom gland.

The protein resides in the secreted. In terms of biological role, binds to the nicotinic acetylcholine receptor. Blocks neuromuscular transmission. The chain is U6-theraphotoxin-Hs1a from Cyriopagopus schmidti (Chinese bird spider).